The sequence spans 352 residues: Uroporphyrinogen decarboxylase (352 aa).

Substrate-binding positions include 26 to 30 (RQAGR), D76, Y153, S208, and H323.

This sequence belongs to the uroporphyrinogen decarboxylase family. As to quaternary structure, homodimer.

The protein resides in the cytoplasm. The catalysed reaction is uroporphyrinogen III + 4 H(+) = coproporphyrinogen III + 4 CO2. It participates in porphyrin-containing compound metabolism; protoporphyrin-IX biosynthesis; coproporphyrinogen-III from 5-aminolevulinate: step 4/4. Catalyzes the decarboxylation of four acetate groups of uroporphyrinogen-III to yield coproporphyrinogen-III. In Synechococcus sp. (strain CC9605), this protein is Uroporphyrinogen decarboxylase.